Consider the following 20-residue polypeptide: Alpha-amylase (20 aa).

It catalyses the reaction Endohydrolysis of (1-&gt;4)-alpha-D-glucosidic linkages in polysaccharides containing three or more (1-&gt;4)-alpha-linked D-glucose units.. Strongly inhibited by Hg (2+). Inhibited by Zn (2+). Activated by Fe (2+), Mg (2+) and Ba (2+). Functionally, alpha-amylase active towards amylose, starch, amylopectin and maltodextrins. Has lower activity towards glycogen, and is not active towards alpha/beta-cyclodextrin. The polypeptide is Alpha-amylase (Bacillus sp).